The chain runs to 698 residues: DNA-directed RNA polymerase subunit beta' (698 aa).

The Zn(2+) site is built by Cys69, Cys71, Cys89, and Cys92. Residues Asp509, Asp511, and Asp513 each coordinate Mg(2+).

This sequence belongs to the RNA polymerase beta' chain family. RpoC1 subfamily. In terms of assembly, in plastids the minimal PEP RNA polymerase catalytic core is composed of four subunits: alpha, beta, beta', and beta''. When a (nuclear-encoded) sigma factor is associated with the core the holoenzyme is formed, which can initiate transcription. The cofactor is Mg(2+). Requires Zn(2+) as cofactor.

The protein localises to the plastid. It is found in the chloroplast. The enzyme catalyses RNA(n) + a ribonucleoside 5'-triphosphate = RNA(n+1) + diphosphate. DNA-dependent RNA polymerase catalyzes the transcription of DNA into RNA using the four ribonucleoside triphosphates as substrates. This Cryptomeria japonica (Japanese cedar) protein is DNA-directed RNA polymerase subunit beta'.